We begin with the raw amino-acid sequence, 842 residues long: Envelope glycoprotein H (842 aa).

The first 20 residues, 1-20 (MRRPLCAALLAAAVLALAAG), serve as a signal peptide directing secretion. Residues 21–802 (APAAARGGAG…AGHEAPTFSP (782 aa)) are Virion surface-facing. 2 N-linked (GlcNAc...) asparagine; by host glycosylation sites follow: Asn77 and Asn112. The interaction with gL stretch occupies residues 240 to 303 (ERAAARLAVG…AAGPQRRAYV (64 aa)). N-linked (GlcNAc...) asparagine; by host glycans are attached at residues Asn617, Asn666, Asn760, and Asn783. A helical transmembrane segment spans residues 803–823 (AYVWASVGGALVAGTTIYAIA). The Intravirion portion of the chain corresponds to 824-842 (KMLCSSVPLARGYSSVPVF).

This sequence belongs to the herpesviridae glycoprotein H family. Interacts with glycoprotein L (gL); this interaction is necessary for the correct processing and cell surface expression of gH. The heterodimer gH/gL seems to interact with gB trimers during fusion. In terms of processing, N-glycosylated, O-glycosylated, and sialylated.

It localises to the virion membrane. Its subcellular location is the host cell membrane. The protein resides in the host endosome membrane. The heterodimer glycoprotein H-glycoprotein L is required for the fusion of viral and plasma membranes leading to virus entry into the host cell. Following initial binding to host receptor, membrane fusion is mediated by the fusion machinery composed of gB and the heterodimer gH/gL. May also be involved in the fusion between the virion envelope and the outer nuclear membrane during virion morphogenesis. This chain is Envelope glycoprotein H, found in Bos taurus (Bovine).